Reading from the N-terminus, the 199-residue chain is Pyrrolidone-carboxylate peptidase (199 aa).

Residues Glu80, Cys142, and His166 contribute to the active site.

The protein belongs to the peptidase C15 family. As to quaternary structure, homotetramer.

Its subcellular location is the cytoplasm. The catalysed reaction is Release of an N-terminal pyroglutamyl group from a polypeptide, the second amino acid generally not being Pro.. Functionally, removes 5-oxoproline from various penultimate amino acid residues except L-proline. The protein is Pyrrolidone-carboxylate peptidase of Oceanobacillus iheyensis (strain DSM 14371 / CIP 107618 / JCM 11309 / KCTC 3954 / HTE831).